Consider the following 391-residue polypeptide: Sister chromatid cohesion protein DCC1 (391 aa).

This sequence belongs to the DCC1 family. As to quaternary structure, component of the ctf18-RFC complex which consists of ctf18, ctf8, dscc1 and the RFC complex.

Its subcellular location is the nucleus. In terms of biological role, loads pcna onto primed templates regulating velocity, spacing and restart activity of replication forks. May couple DNA replication to sister chromatid cohesion. This chain is Sister chromatid cohesion protein DCC1 (dscc1), found in Danio rerio (Zebrafish).